We begin with the raw amino-acid sequence, 259 residues long: 3-deoxy-manno-octulosonate cytidylyltransferase (259 aa).

Belongs to the KdsB family.

The protein localises to the cytoplasm. It catalyses the reaction 3-deoxy-alpha-D-manno-oct-2-ulosonate + CTP = CMP-3-deoxy-beta-D-manno-octulosonate + diphosphate. It functions in the pathway nucleotide-sugar biosynthesis; CMP-3-deoxy-D-manno-octulosonate biosynthesis; CMP-3-deoxy-D-manno-octulosonate from 3-deoxy-D-manno-octulosonate and CTP: step 1/1. Its pathway is bacterial outer membrane biogenesis; lipopolysaccharide biosynthesis. Activates KDO (a required 8-carbon sugar) for incorporation into bacterial lipopolysaccharide in Gram-negative bacteria. The sequence is that of 3-deoxy-manno-octulosonate cytidylyltransferase from Protochlamydia amoebophila (strain UWE25).